We begin with the raw amino-acid sequence, 492 residues long: Putative cytochrome P450 136 (492 aa).

A heme-binding site is contributed by Cys-439.

It belongs to the cytochrome P450 family. It depends on heme as a cofactor.

In Mycobacterium tuberculosis (strain CDC 1551 / Oshkosh), this protein is Putative cytochrome P450 136 (cyp136).